A 430-amino-acid chain; its full sequence is Histidine--tRNA ligase (430 aa).

It belongs to the class-II aminoacyl-tRNA synthetase family. Homodimer.

The protein localises to the cytoplasm. The catalysed reaction is tRNA(His) + L-histidine + ATP = L-histidyl-tRNA(His) + AMP + diphosphate + H(+). This is Histidine--tRNA ligase from Lactococcus lactis subsp. cremoris (strain MG1363).